A 486-amino-acid chain; its full sequence is Sensor protein PhoQ (486 aa).

The Cytoplasmic portion of the chain corresponds to 1 to 16 (MKKLLHLFFPLSLRVR). A helical membrane pass occupies residues 17 to 37 (FLLATAAVVLVLSLAYGMVAL). Over 38–194 (IGYSVSFDKT…LKSSYMVWSW (157 aa)) the chain is Periplasmic. The a divalent metal cation site is built by D151 and D152. A helical transmembrane segment spans residues 195-215 (FIYVLSANLLLVIPLLWVAAW). In terms of domain architecture, HAMP spans 215–266 (WWSLRPIEALAKEVRELEEHNRELLNPATTRELTSLVRNLNRLLKSERERYD). Residues 216-486 (WSLRPIEALA…GRQHSAPKDE (271 aa)) lie on the Cytoplasmic side of the membrane. Positions 274-480 (DLTHSLKTPL…RMEVIFGRQH (207 aa)) constitute a Histidine kinase domain. Residue H277 is modified to Phosphohistidine; by autocatalysis. N385 contributes to the Mg(2+) binding site. ATP contacts are provided by residues 385-393 (NVLDNACKY), 415-420 (DDGPGI), and 434-446 (RVDTLRPGQGVGL). Q442 lines the Mg(2+) pocket.

As to quaternary structure, homodimer.

It localises to the cell inner membrane. The catalysed reaction is ATP + protein L-histidine = ADP + protein N-phospho-L-histidine.. Its function is as follows. Member of the two-component regulatory system PhoP/PhoQ involved in virulence, adaptation to low Mg(2+) environments and the control of acid resistance genes. In low periplasmic Mg(2+), PhoQ functions as a membrane-associated protein kinase that undergoes autophosphorylation and subsequently transfers the phosphate to PhoP, resulting in the expression of PhoP-activated genes (PAG) and repression of PhoP-repressed genes (PRG). In high periplasmic Mg(2+), acts as a protein phosphatase that dephosphorylates phospho-PhoP, which results in the repression of PG and may lead to expression of some PRG. This is Sensor protein PhoQ (phoQ) from Escherichia coli O6:H1 (strain CFT073 / ATCC 700928 / UPEC).